Consider the following 240-residue polypeptide: Sugar fermentation stimulation protein homolog (240 aa).

It belongs to the SfsA family.

The polypeptide is Sugar fermentation stimulation protein homolog (Crocosphaera subtropica (strain ATCC 51142 / BH68) (Cyanothece sp. (strain ATCC 51142))).